The primary structure comprises 380 residues: Beta sliding clamp (380 aa).

Belongs to the beta sliding clamp family. As to quaternary structure, forms a ring-shaped head-to-tail homodimer around DNA which binds and tethers DNA polymerases and other proteins to the DNA. The DNA replisome complex has a single clamp-loading complex (3 tau and 1 each of delta, delta', psi and chi subunits) which binds 3 Pol III cores (1 core on the leading strand and 2 on the lagging strand) each with a beta sliding clamp dimer. Additional proteins in the replisome are other copies of gamma, psi and chi, Ssb, DNA helicase and RNA primase.

The protein localises to the cytoplasm. Its function is as follows. Confers DNA tethering and processivity to DNA polymerases and other proteins. Acts as a clamp, forming a ring around DNA (a reaction catalyzed by the clamp-loading complex) which diffuses in an ATP-independent manner freely and bidirectionally along dsDNA. Initially characterized for its ability to contact the catalytic subunit of DNA polymerase III (Pol III), a complex, multichain enzyme responsible for most of the replicative synthesis in bacteria; Pol III exhibits 3'-5' exonuclease proofreading activity. The beta chain is required for initiation of replication as well as for processivity of DNA replication. In Lactococcus lactis subsp. lactis (strain IL1403) (Streptococcus lactis), this protein is Beta sliding clamp (dnaN).